The chain runs to 588 residues: 2-isopropylmalate synthase (588 aa).

The 275-residue stretch at P40–D314 folds into the Pyruvate carboxyltransferase domain. Mg(2+) is bound by residues D49, H253, H255, and N289. Positions A456–V588 are regulatory domain.

This sequence belongs to the alpha-IPM synthase/homocitrate synthase family. LeuA type 2 subfamily. Homodimer. Mg(2+) serves as cofactor.

It localises to the cytoplasm. It carries out the reaction 3-methyl-2-oxobutanoate + acetyl-CoA + H2O = (2S)-2-isopropylmalate + CoA + H(+). It participates in amino-acid biosynthesis; L-leucine biosynthesis; L-leucine from 3-methyl-2-oxobutanoate: step 1/4. In terms of biological role, catalyzes the condensation of the acetyl group of acetyl-CoA with 3-methyl-2-oxobutanoate (2-ketoisovalerate) to form 3-carboxy-3-hydroxy-4-methylpentanoate (2-isopropylmalate). In Clavibacter michiganensis subsp. michiganensis (strain NCPPB 382), this protein is 2-isopropylmalate synthase.